Reading from the N-terminus, the 111-residue chain is Glutaredoxin-C2 (111 aa).

The Glutaredoxin domain maps to 3-103 (MQKAKEIVNS…PLLTEAGAIA (101 aa)). Cys23 and Cys26 form a disulfide bridge.

It belongs to the glutaredoxin family. CPYC subfamily.

The protein localises to the cytoplasm. Has a glutathione-disulfide oxidoreductase activity in the presence of NADPH and glutathione reductase. Reduces low molecular weight disulfides and proteins. The protein is Glutaredoxin-C2 (GRXC2) of Arabidopsis thaliana (Mouse-ear cress).